Here is a 230-residue protein sequence, read N- to C-terminus: MIRKSSGLRTLESALYRSGLGPVAGVDEVGRGACAGPLVVAACVLGPGKLESLAALDDSKKLTESVRERLFPVIRRYALAYHVVFIPPAEVDRRGVHVANIEGMRRAVAGLSLRPGYVLSDGFRVPGLAVPSLPVIGGDAVAACIAAASVLAKVSRDRLMVAMDAEHPGYGFADHKGYSTPAHSAALARLGPCPQHRHSFINVRRVANGSGGRVVADCKPDLPLQRDEGR.

Positions 21 to 212 (GPVAGVDEVG…VRRVANGSGG (192 aa)) constitute an RNase H type-2 domain. Residues D27, E28, and D121 each coordinate a divalent metal cation.

Belongs to the RNase HII family. Requires Mn(2+) as cofactor. It depends on Mg(2+) as a cofactor.

Its subcellular location is the cytoplasm. The catalysed reaction is Endonucleolytic cleavage to 5'-phosphomonoester.. Endonuclease that specifically degrades the RNA of RNA-DNA hybrids. This is Ribonuclease HII from Mycobacterium avium (strain 104).